Reading from the N-terminus, the 475-residue chain is Glutamate--tRNA ligase (475 aa).

The 'HIGH' region signature appears at 9–19; the sequence is PSPTGYLHVGG. The 'KMSKS' region signature appears at 240–244; the sequence is KLSKR. Lys-243 contributes to the ATP binding site.

Belongs to the class-I aminoacyl-tRNA synthetase family. Glutamate--tRNA ligase type 1 subfamily. As to quaternary structure, monomer.

The protein localises to the cytoplasm. It catalyses the reaction tRNA(Glu) + L-glutamate + ATP = L-glutamyl-tRNA(Glu) + AMP + diphosphate. Its function is as follows. Catalyzes the attachment of glutamate to tRNA(Glu) in a two-step reaction: glutamate is first activated by ATP to form Glu-AMP and then transferred to the acceptor end of tRNA(Glu). The protein is Glutamate--tRNA ligase of Vibrio campbellii (strain ATCC BAA-1116).